The following is a 197-amino-acid chain: Phospholipid hydroperoxide glutathione peroxidase (197 aa).

The residue at position 40 (S40) is a Phosphoserine. The active site involves U73. Position 73 (U73) is a non-standard amino acid, selenocysteine.

It belongs to the glutathione peroxidase family. In terms of assembly, monomer. Has a tendency to form higher mass oligomers. Interacts with FUNDC1; this interaction promotes GPX4 recruitment into mitochondria through TOM/TIM complex where it is degraded by mitophagy.

The protein localises to the mitochondrion. The protein resides in the cytoplasm. The catalysed reaction is a hydroperoxy polyunsaturated fatty acid + 2 glutathione = a hydroxy polyunsaturated fatty acid + glutathione disulfide + H2O. The enzyme catalyses 2 glutathione + H2O2 = glutathione disulfide + 2 H2O. It catalyses the reaction tert-butyl hydroperoxide + 2 glutathione = tert-butanol + glutathione disulfide + H2O. It carries out the reaction cumene hydroperoxide + 2 glutathione = 2-phenylpropan-2-ol + glutathione disulfide + H2O. The catalysed reaction is (9S)-hydroperoxy-(10E,12Z)-octadecadienoate + 2 glutathione = (9S)-hydroxy-(10E,12Z)-octadecadienoate + glutathione disulfide + H2O. The enzyme catalyses (13S)-hydroperoxy-(9Z,11E)-octadecadienoate + 2 glutathione = (13S)-hydroxy-(9Z,11E)-octadecadienoate + glutathione disulfide + H2O. It catalyses the reaction (5S)-hydroperoxy-(6E,8Z,11Z,14Z)-eicosatetraenoate + 2 glutathione = (5S)-hydroxy-(6E,8Z,11Z,14Z)-eicosatetraenoate + glutathione disulfide + H2O. It carries out the reaction (12R)-hydroperoxy-(5Z,8Z,10E,14Z)-eicosatetraenoate + 2 glutathione = (12R)-hydroxy-(5Z,8Z,10E,14Z)-eicosatetraenoate + glutathione disulfide + H2O. The catalysed reaction is (12S)-hydroperoxy-(5Z,8Z,10E,14Z)-eicosatetraenoate + 2 glutathione = (12S)-hydroxy-(5Z,8Z,10E,14Z)-eicosatetraenoate + glutathione disulfide + H2O. The enzyme catalyses (15S)-hydroperoxy-(5Z,8Z,11Z,13E)-eicosatetraenoate + 2 glutathione = (15S)-hydroxy-(5Z,8Z,11Z,13E)-eicosatetraenoate + glutathione disulfide + H2O. It catalyses the reaction (5S)-hydroperoxy-(6E,8Z,11Z,14Z,17Z)-eicosapentaenoate + 2 glutathione = (5S)-hydroxy-(6E,8Z,11Z,14Z,17Z)-eicosapentaenoate + glutathione disulfide + H2O. It carries out the reaction (12S)-hydroperoxy-(5Z,8Z,10E,14Z,17Z)-eicosapentaenoate + 2 glutathione = (12S)-hydroxy-(5Z,8Z,10E,14Z,17Z)-eicosapentaenoate + glutathione disulfide + H2O. The catalysed reaction is (15S)-hydroperoxy-(5Z,8Z,11Z,13E,17Z)-eicosapentaenoate + 2 glutathione = (15S)-hydroxy-(5Z,8Z,11Z,13E,17Z)-eicosapentaenoate + glutathione disulfide + H2O. The enzyme catalyses (15S)-hydroperoxy-(11Z,13E)-eicosadienoate + 2 glutathione = (15S)-hydroxy-(11Z,13E)-eicosadienoate + glutathione disulfide + H2O. It catalyses the reaction (17S)-hydroperoxy-(4Z,7Z,10Z,13Z,15E,19Z)-docosahexaenoate + 2 glutathione = (17S)-hydroxy-(4Z,7Z,10Z,13Z,15E,19Z)-docosahexaenoate + glutathione disulfide + H2O. It carries out the reaction a hydroperoxy-1,2-diacyl-glycero-3-phosphocholine + 2 glutathione = a hydroxy-1,2-diacyl-glycero-3-phosphocholine + glutathione disulfide + H2O. In terms of biological role, essential antioxidant peroxidase that directly reduces phospholipid hydroperoxide even if they are incorporated in membranes and lipoproteins. Can also reduce fatty acid hydroperoxide, cholesterol hydroperoxide and thymine hydroperoxide. Plays a key role in protecting cells from oxidative damage by preventing membrane lipid peroxidation. Required to prevent cells from ferroptosis, a non-apoptotic cell death resulting from an iron-dependent accumulation of lipid reactive oxygen species. The presence of selenocysteine (Sec) versus Cys at the active site is essential for life: it provides resistance to overoxidation and prevents cells against ferroptosis. The presence of Sec at the active site is also essential for the survival of a specific type of parvalbumin-positive interneurons, thereby preventing against fatal epileptic seizures. May be required to protect cells from the toxicity of ingested lipid hydroperoxides. Required for normal sperm development and male fertility. Essential for maturation and survival of photoreceptor cells. Plays a role in a primary T-cell response to viral and parasitic infection by protecting T-cells from ferroptosis and by supporting T-cell expansion. Plays a role of glutathione peroxidase in platelets in the arachidonic acid metabolism. Reduces hydroperoxy ester lipids formed by a 15-lipoxygenase that may play a role as down-regulator of the cellular 15-lipoxygenase pathway. Can also reduce small soluble hydroperoxides such as H2O2, cumene hydroperoxide and tert-butyl hydroperoxide. The sequence is that of Phospholipid hydroperoxide glutathione peroxidase from Pongo pygmaeus (Bornean orangutan).